Reading from the N-terminus, the 125-residue chain is Small ribosomal subunit protein uS12 (125 aa).

At Asp89 the chain carries 3-methylthioaspartic acid. The interval 106–125 (GVKDRKQSRSKYGAKRPKKA) is disordered. Positions 113-125 (SRSKYGAKRPKKA) are enriched in basic residues.

Belongs to the universal ribosomal protein uS12 family. As to quaternary structure, part of the 30S ribosomal subunit. Contacts proteins S8 and S17. May interact with IF1 in the 30S initiation complex.

Its function is as follows. With S4 and S5 plays an important role in translational accuracy. In terms of biological role, interacts with and stabilizes bases of the 16S rRNA that are involved in tRNA selection in the A site and with the mRNA backbone. Located at the interface of the 30S and 50S subunits, it traverses the body of the 30S subunit contacting proteins on the other side and probably holding the rRNA structure together. The combined cluster of proteins S8, S12 and S17 appears to hold together the shoulder and platform of the 30S subunit. The protein is Small ribosomal subunit protein uS12 of Variovorax paradoxus (strain S110).